Consider the following 187-residue polypeptide: Threonylcarbamoyl-AMP synthase (187 aa).

In terms of domain architecture, YrdC-like spans 3–187 (QVTPSQISGI…IQTGHIFRQG (185 aa)).

The protein belongs to the SUA5 family. TsaC subfamily.

Its subcellular location is the cytoplasm. The catalysed reaction is L-threonine + hydrogencarbonate + ATP = L-threonylcarbamoyladenylate + diphosphate + H2O. Required for the formation of a threonylcarbamoyl group on adenosine at position 37 (t(6)A37) in tRNAs that read codons beginning with adenine. Catalyzes the conversion of L-threonine, HCO(3)(-)/CO(2) and ATP to give threonylcarbamoyl-AMP (TC-AMP) as the acyladenylate intermediate, with the release of diphosphate. This is Threonylcarbamoyl-AMP synthase from Shewanella amazonensis (strain ATCC BAA-1098 / SB2B).